Reading from the N-terminus, the 108-residue chain is X antigen family member 5 (108 aa).

Positions 20–108 are disordered; that stretch reads VGPMLEPSVP…PEGGEGKPQL (89 aa). Composition is skewed to basic and acidic residues over residues 40–52 and 94–108; these read SQDH…REDD and EQFK…KPQL.

It belongs to the GAGE family.

The protein is X antigen family member 5 (XAGE5) of Homo sapiens (Human).